A 329-amino-acid chain; its full sequence is GTP 3',8-cyclase (329 aa).

The Radical SAM core domain occupies 8–234 (AFARKFYYLR…QLRQRSDGPA (227 aa)). Arg-17 contributes to the GTP binding site. Cys-24 and Cys-28 together coordinate [4Fe-4S] cluster. Residue Tyr-30 participates in S-adenosyl-L-methionine binding. Residue Cys-31 participates in [4Fe-4S] cluster binding. Residue Arg-68 coordinates GTP. An S-adenosyl-L-methionine-binding site is contributed by Gly-72. Thr-99 provides a ligand contact to GTP. Ser-123 is an S-adenosyl-L-methionine binding site. Lys-160 contacts GTP. Residue Met-194 participates in S-adenosyl-L-methionine binding. [4Fe-4S] cluster-binding residues include Cys-257 and Cys-260. 262–264 (RLR) contacts GTP. [4Fe-4S] cluster is bound at residue Cys-274.

Belongs to the radical SAM superfamily. MoaA family. Monomer and homodimer. It depends on [4Fe-4S] cluster as a cofactor.

The catalysed reaction is GTP + AH2 + S-adenosyl-L-methionine = (8S)-3',8-cyclo-7,8-dihydroguanosine 5'-triphosphate + 5'-deoxyadenosine + L-methionine + A + H(+). The protein operates within cofactor biosynthesis; molybdopterin biosynthesis. Its function is as follows. Catalyzes the cyclization of GTP to (8S)-3',8-cyclo-7,8-dihydroguanosine 5'-triphosphate. This Shigella sonnei (strain Ss046) protein is GTP 3',8-cyclase.